We begin with the raw amino-acid sequence, 88 residues long: Small ribosomal subunit protein bS16 (88 aa).

The protein belongs to the bacterial ribosomal protein bS16 family.

This Geotalea daltonii (strain DSM 22248 / JCM 15807 / FRC-32) (Geobacter daltonii) protein is Small ribosomal subunit protein bS16.